Here is a 104-residue protein sequence, read N- to C-terminus: Large ribosomal subunit protein uL24 (104 aa).

Belongs to the universal ribosomal protein uL24 family. As to quaternary structure, part of the 50S ribosomal subunit.

In terms of biological role, one of two assembly initiator proteins, it binds directly to the 5'-end of the 23S rRNA, where it nucleates assembly of the 50S subunit. Functionally, one of the proteins that surrounds the polypeptide exit tunnel on the outside of the subunit. This chain is Large ribosomal subunit protein uL24, found in Ectopseudomonas mendocina (strain ymp) (Pseudomonas mendocina).